The chain runs to 574 residues: Serine/threonine-protein kinase rio1 (574 aa).

The 292-residue stretch at 171–462 folds into the Protein kinase domain; that stretch reads LMLFKMINKG…GRDIFYQNLT (292 aa). The ATP site is built by lysine 211 and isoleucine 283. Aspartate 327 acts as the Proton acceptor in catalysis. Positions 332 and 344 each coordinate Mg(2+). Aspartate 344 (4-aspartylphosphate intermediate) is an active-site residue. Positions 474–488 are enriched in basic and acidic residues; sequence KNDLINDSNENKDSD. 2 disordered regions span residues 474 to 513 and 538 to 574; these read KNDLINDSNENKDSDDSSSDSSEDSDDDSDSDQLNEDDEK and RKKFVKEMNKERRKTKIPKHIKKLTKKRKAEKFGKKK. The span at 489-511 shows a compositional bias: acidic residues; the sequence is DSSSDSSEDSDDDSDSDQLNEDD. A compositionally biased stretch (basic residues) spans 548-574; that stretch reads ERRKTKIPKHIKKLTKKRKAEKFGKKK.

Belongs to the protein kinase superfamily. RIO-type Ser/Thr kinase family. It depends on Mg(2+) as a cofactor.

The protein localises to the cytoplasm. The enzyme catalyses L-seryl-[protein] + ATP = O-phospho-L-seryl-[protein] + ADP + H(+). It carries out the reaction L-threonyl-[protein] + ATP = O-phospho-L-threonyl-[protein] + ADP + H(+). The catalysed reaction is ATP + H2O = ADP + phosphate + H(+). Its function is as follows. Required for the final endonucleolytic cleavage at site D converting 20S pre-rRNA into the mature 18S rRNA. Required for the final steps of cytoplasmic maturation of the 40S ribosomal subunit. Despite the protein kinase domain is proposed to act predominantly as an ATPase. The chain is Serine/threonine-protein kinase rio1 (rio1) from Dictyostelium discoideum (Social amoeba).